A 125-amino-acid chain; its full sequence is S-adenosylmethionine decarboxylase proenzyme (125 aa).

Ser71 (schiff-base intermediate with substrate; via pyruvic acid) is an active-site residue. The residue at position 71 (Ser71) is a Pyruvic acid (Ser); by autocatalysis. His76 (proton acceptor; for processing activity) is an active-site residue. Catalysis depends on Cys91, which acts as the Proton donor; for catalytic activity.

It belongs to the prokaryotic AdoMetDC family. Type 1 subfamily. As to quaternary structure, heterotetramer of two alpha and two beta chains arranged as a dimer of alpha/beta heterodimers. It depends on pyruvate as a cofactor. Post-translationally, is synthesized initially as an inactive proenzyme. Formation of the active enzyme involves a self-maturation process in which the active site pyruvoyl group is generated from an internal serine residue via an autocatalytic post-translational modification. Two non-identical subunits are generated from the proenzyme in this reaction, and the pyruvate is formed at the N-terminus of the alpha chain, which is derived from the carboxyl end of the proenzyme. The post-translation cleavage follows an unusual pathway, termed non-hydrolytic serinolysis, in which the side chain hydroxyl group of the serine supplies its oxygen atom to form the C-terminus of the beta chain, while the remainder of the serine residue undergoes an oxidative deamination to produce ammonia and the pyruvoyl group blocking the N-terminus of the alpha chain.

The enzyme catalyses S-adenosyl-L-methionine + H(+) = S-adenosyl 3-(methylsulfanyl)propylamine + CO2. Its pathway is amine and polyamine biosynthesis; S-adenosylmethioninamine biosynthesis; S-adenosylmethioninamine from S-adenosyl-L-methionine: step 1/1. In terms of biological role, catalyzes the decarboxylation of S-adenosylmethionine to S-adenosylmethioninamine (dcAdoMet), the propylamine donor required for the synthesis of the polyamines spermine and spermidine from the diamine putrescine. The chain is S-adenosylmethionine decarboxylase proenzyme from Pyrobaculum aerophilum (strain ATCC 51768 / DSM 7523 / JCM 9630 / CIP 104966 / NBRC 100827 / IM2).